A 507-amino-acid chain; its full sequence is Alkyl hydroperoxide reductase subunit F (507 aa).

207-222 (DVLIVGGGPASGSAAI) contacts FAD. A disulfide bridge links Cys-335 with Cys-338. Position 347–361 (347–361 (DVAVIGGGNSGVEAA)) interacts with NAD(+). Residue 467 to 477 (TNVPGIFAAGD) participates in FAD binding.

It belongs to the class-II pyridine nucleotide-disulfide oxidoreductase family. As to quaternary structure, homodimer. FAD serves as cofactor.

Functionally, serves to protect the cell against DNA damage by alkyl hydroperoxides. It can use either NADH or NADPH as electron donor for direct reduction of redox dyes or of alkyl hydroperoxides when combined with the AhpC protein. The protein is Alkyl hydroperoxide reductase subunit F (ahpF) of Staphylococcus aureus (strain NCTC 8325 / PS 47).